A 131-amino-acid chain; its full sequence is Small ribosomal subunit protein uS8 (131 aa).

This sequence belongs to the universal ribosomal protein uS8 family. Part of the 30S ribosomal subunit. Contacts proteins S5 and S12.

One of the primary rRNA binding proteins, it binds directly to 16S rRNA central domain where it helps coordinate assembly of the platform of the 30S subunit. The chain is Small ribosomal subunit protein uS8 from Wolbachia sp. subsp. Brugia malayi (strain TRS).